A 328-amino-acid polypeptide reads, in one-letter code: Cytochrome c biogenesis protein CcsA (328 aa).

8 helical membrane passes run 13 to 33 (ISFSVVSIVMTIYFLTLLVNL), 46 to 66 (GIIITFFSITGFLFTRWIFSG), 73 to 93 (LYESLIFLSWAFSIIHMISFF), 101 to 121 (LNAITAPSAIFIQGFATSGLL), 146 to 166 (MVLGYGALLCGSLLSIALLVI), 234 to 254 (IISLGFLFLTIGILSGAVWAN), 263 to 283 (WDPKETWAFITWTIFAIYLHI), and 295 to 315 (AIVASIGFLVIWICYFGVNLL).

It belongs to the CcmF/CycK/Ccl1/NrfE/CcsA family. As to quaternary structure, may interact with Ccs1.

It localises to the plastid. Its subcellular location is the chloroplast thylakoid membrane. In terms of biological role, required during biogenesis of c-type cytochromes (cytochrome c6 and cytochrome f) at the step of heme attachment. The sequence is that of Cytochrome c biogenesis protein CcsA from Aethionema grandiflorum (Persian stone-cress).